The sequence spans 841 residues: Probable inorganic carbon transporter subunit DabA 1 (841 aa).

The Zn(2+) site is built by Cys-352, Asp-354, His-536, and Cys-551.

The protein belongs to the inorganic carbon transporter (TC 9.A.2) DabA family. As to quaternary structure, forms a complex with DabB. Zn(2+) is required as a cofactor.

The protein localises to the cell inner membrane. Functionally, part of an energy-coupled inorganic carbon pump. The sequence is that of Probable inorganic carbon transporter subunit DabA 1 from Bradyrhizobium sp. (strain ORS 278).